The following is a 227-amino-acid chain: Probable septum site-determining protein MinC (227 aa).

It belongs to the MinC family. In terms of assembly, interacts with MinD and FtsZ.

Functionally, cell division inhibitor that blocks the formation of polar Z ring septums. Rapidly oscillates between the poles of the cell to destabilize FtsZ filaments that have formed before they mature into polar Z rings. Prevents FtsZ polymerization. This Clostridioides difficile (strain 630) (Peptoclostridium difficile) protein is Probable septum site-determining protein MinC.